Consider the following 371-residue polypeptide: Putative F-box protein At1g58090 (371 aa).

In terms of domain architecture, F-box spans 1–46 (MVSKKLPLDLEEEILFRVPPRSLVRFRSVCREWNTLFKNKRFINKN).

The polypeptide is Putative F-box protein At1g58090 (Arabidopsis thaliana (Mouse-ear cress)).